We begin with the raw amino-acid sequence, 271 residues long: Shikimate kinase (271 aa).

Position 83–93 (83–93 (PIAMGLKSSSA)) interacts with ATP.

The protein belongs to the GHMP kinase family. Archaeal shikimate kinase subfamily.

It localises to the cytoplasm. The catalysed reaction is shikimate + ATP = 3-phosphoshikimate + ADP + H(+). It participates in metabolic intermediate biosynthesis; chorismate biosynthesis; chorismate from D-erythrose 4-phosphate and phosphoenolpyruvate: step 5/7. This chain is Shikimate kinase, found in Thermococcus kodakarensis (strain ATCC BAA-918 / JCM 12380 / KOD1) (Pyrococcus kodakaraensis (strain KOD1)).